The chain runs to 678 residues: Ribosome biogenesis protein BOP1 homolog (678 aa).

A compositionally biased stretch (basic and acidic residues) spans 1–10 (MGHSDGDHGS). Positions 1 to 73 (MGHSDGDHGS…VAPRNTIGDV (73 aa)) are disordered. Acidic residues predominate over residues 24–63 (WSDDDDEGSLSFEDSGEGSDAESDEPDAPAVEESDSSEDE). WD repeat units lie at residues 343–384 (GHNG…KVWN), 386–424 (GGVV…EDAQ), 463–505 (IHHK…SHHP), 508–548 (KLPG…KKLE), 549–588 (SGVR…RPYK), 592–631 (NHSK…DLNQ), and 647–678 (SDGR…LYCD).

The protein belongs to the WD repeat BOP1/ERB1 family.

It is found in the nucleus. The protein localises to the nucleolus. The protein resides in the nucleoplasm. Functionally, required for maturation of ribosomal RNAs and formation of the large ribosomal subunit. The polypeptide is Ribosome biogenesis protein BOP1 homolog (Oryza sativa subsp. japonica (Rice)).